The chain runs to 348 residues: N-(sulfonatooxy)prop-2-enimidothioate sulfolyase (348 aa).

Kelch repeat units lie at residues 1–33, 34–85, 87–133, 139–194, 209–254, 259–314, and 322–348; these read MART…VIGD, KLYC…VAVG, KLYV…FHSM, HVYV…VVQG, KIPT…FAHA, YIII…ASTT, and GLLV…NSST. A (Z)-N-(sulfonatooxy)alkanimidothioate is bound by residues Glu-46, Arg-94, Thr-129, Phe-130, and Arg-157. Arg-94 (proton donor) is an active-site residue. Arg-157 (proton donor) is an active-site residue. Glu-220 (proton acceptor) is an active-site residue. Glu-266 contacts Fe(2+). Residue Arg-269 coordinates a (Z)-N-(sulfonatooxy)alkanimidothioate. The Fe(2+) site is built by Asp-270 and His-274. A (Z)-N-(sulfonatooxy)alkanimidothioate-binding residues include Trp-309 and Val-310.

In terms of assembly, homodimer. Requires Fe(2+) as cofactor. As to expression, expressed constitutively in roots, stems, leaves, flowers, siliques and seedlings.

It catalyses the reaction (Z)-N-(sulfonatooxy)prop-2-enimidothioate = allyl thiocyanate + sulfate. It carries out the reaction (Z)-N-(sulfonatooxy)prop-2-enimidothioate = 2-(thiiran-2-yl)acetonitrile + sulfate. The catalysed reaction is (Z)-N-(sulfonatooxy)prop-2-enimidothioate = allyl isothiocyanate + sulfate. The enzyme catalyses (Z)-phenyl-N-(sulfonatooxy)methanimidothioate = phenylacetonitrile + sulfur + sulfate. It catalyses the reaction glucoerucin + H2O = (Z)-4-methylsulfanylbutyl-N-(sulfonatooxy)methanimidothioate + D-glucose. It carries out the reaction (Z)-4-methylsulfanylbutyl-N-(sulfonatooxy)methanimidothioate = 5-(methylsulfanyl)pentanenitrile + sulfur + sulfate + H(+). Its activity is regulated as follows. Stimulated by the presence of Fe(2+) leading to an increase formation of both thiocyanate and epithionitrile with allylglucosinolate as substrate in the presence of myrosinase. Repressed by EDTA. Its function is as follows. Specifier protein that contributes to constitutive and herbivore-induced simple nitrile formation. Catalyzes allylthiocyanate and corresponding epithionitrile formation from allylglucosinolate in the presence of myrosinase. Also converts aliphatic glucosinolates, such as indol-3-ylmethylglucosinolate, 4-methylsulfinylbutylglucosinolate, 4-methylthiobutyl- and benzylisothiocyanate, to simple nitriles. In Thlaspi arvense (Field penny-cress), this protein is N-(sulfonatooxy)prop-2-enimidothioate sulfolyase.